The chain runs to 1223 residues: Glycerophosphocholine phosphodiesterase GDE1 (1223 aa).

Residues 1-213 (MKFGKTFANH…GTNQQMSTMK (213 aa)) enclose the SPX domain. Over residues 43–59 (HNKNSYDEGRPPTKMRD) the composition is skewed to basic and acidic residues. A disordered region spans residues 43 to 64 (HNKNSYDEGRPPTKMRDSSNSA). 6 ANK repeats span residues 427-456 (YKRT…EWNI), 472-502 (ESLT…NVKL), 504-533 (SSSL…DINY), 538-567 (LHET…DLEI), 572-601 (FGWT…NFDI), and 605-634 (GGWT…LVTH). Position 653 is a phosphoserine (S653). Residues 872–1217 (TRVIGHRGLG…DSVLAIRRGL (346 aa)) enclose the GP-PDE domain. A divalent metal cation-binding residues include E911, D913, and H926. Residue S983 is modified to Phosphoserine.

Belongs to the GDE1 family. Requires a divalent metal cation as cofactor.

The protein resides in the cytoplasm. It catalyses the reaction sn-glycerol 3-phosphocholine + H2O = sn-glycerol 3-phosphate + choline + H(+). It carries out the reaction sn-glycero-3-phospho-1D-myo-inositol + H2O = myo-inositol + sn-glycerol 3-phosphate + H(+). Glycerophosphocholine glycerophosphodiesterase responsible for the hydrolysis of intracellular glycerophosphocholine into glycerol-phosphate and choline. The choline is used for phosphatidyl-choline synthesis. Required for utilization of glycerophosphocholine as phosphate source. May also use glycerophosphoinositol as substrate in vivo. This chain is Glycerophosphocholine phosphodiesterase GDE1, found in Saccharomyces cerevisiae (strain ATCC 204508 / S288c) (Baker's yeast).